The chain runs to 397 residues: S-adenosylmethionine synthase (397 aa).

H17 contributes to the ATP binding site. D19 lines the Mg(2+) pocket. E45 serves as a coordination point for K(+). Positions 58 and 101 each coordinate L-methionine. The tract at residues 101–111 (QSPDIAQGVDK) is flexible loop. ATP is bound by residues 176–178 (DGK), 243–244 (RF), D252, 258–259 (RK), and K279. An L-methionine-binding site is contributed by D252. K283 serves as a coordination point for L-methionine.

It belongs to the AdoMet synthase family. In terms of assembly, homotetramer; dimer of dimers. Mg(2+) is required as a cofactor. The cofactor is K(+).

It is found in the cytoplasm. It carries out the reaction L-methionine + ATP + H2O = S-adenosyl-L-methionine + phosphate + diphosphate. It participates in amino-acid biosynthesis; S-adenosyl-L-methionine biosynthesis; S-adenosyl-L-methionine from L-methionine: step 1/1. Its function is as follows. Catalyzes the formation of S-adenosylmethionine (AdoMet) from methionine and ATP. The overall synthetic reaction is composed of two sequential steps, AdoMet formation and the subsequent tripolyphosphate hydrolysis which occurs prior to release of AdoMet from the enzyme. In Staphylococcus aureus, this protein is S-adenosylmethionine synthase.